Consider the following 650-residue polypeptide: ATP-dependent zinc metalloprotease FtsH (650 aa).

Residues 1–10 (MKTKKSKSTL) are Cytoplasmic-facing. The chain crosses the membrane as a helical span at residues 11–31 (WFWLIILLAIIVTIIIIAVTV). Residues 32–123 (KGTTQVISDA…LVYQGSVGMA (92 aa)) lie on the Extracellular side of the membrane. The helical transmembrane segment at 124–144 (LLVSLAPLLIYVLLFGGIIWF) threads the bilayer. Residues 145–650 (MMKSSSGAGA…DIKVEDLDID (506 aa)) lie on the Cytoplasmic side of the membrane. Position 217–224 (217–224 (GPPGTGKT)) interacts with ATP. H437 provides a ligand contact to Zn(2+). The active site involves E438. Positions 441 and 515 each coordinate Zn(2+).

This sequence in the central section; belongs to the AAA ATPase family. It in the C-terminal section; belongs to the peptidase M41 family. In terms of assembly, homohexamer. Requires Zn(2+) as cofactor.

The protein resides in the cell membrane. In terms of biological role, acts as a processive, ATP-dependent zinc metallopeptidase for both cytoplasmic and membrane proteins. Plays a role in the quality control of integral membrane proteins. The chain is ATP-dependent zinc metalloprotease FtsH from Mesoplasma florum (strain ATCC 33453 / NBRC 100688 / NCTC 11704 / L1) (Acholeplasma florum).